Consider the following 266-residue polypeptide: Acetyl esterase (266 aa).

The sequence is that of Acetyl esterase (xynC) from Caldicellulosiruptor saccharolyticus (Caldocellum saccharolyticum).